A 326-amino-acid chain; its full sequence is Interleukin-1-binding protein (326 aa).

Positions 1–18 (MSILPVIFLSIFFYSSFV) are cleaved as a signal peptide. Ig-like domains are found at residues 24–115 (PECI…LNLT), 122–212 (SNID…RIVK), and 221–322 (PSTM…KTVT). Cys-48 and Cys-99 form a disulfide bridge. Residues Asn-80, Asn-103, and Asn-113 are each glycosylated (N-linked (GlcNAc...) asparagine; by host). A disulfide bond links Cys-143 and Cys-194. 2 N-linked (GlcNAc...) asparagine; by host glycosylation sites follow: Asn-206 and Asn-237. An intrachain disulfide couples Cys-242 to Cys-309.

It belongs to the interleukin-1 receptor family. Interacts with mouse Il1b.

The protein resides in the secreted. May reduce the host inflammatory response by interacting with inteleukin-1 beta (Il1b) and thus decreasing the association between IL1B and its cellular receptor. The protein is Interleukin-1-binding protein (OPG201) of Vaccinia virus (strain Western Reserve) (VACV).